A 70-amino-acid chain; its full sequence is DNA-directed RNA polymerases I, II, and III subunit RPABC4 (70 aa).

Positions 31, 34, 48, and 51 each coordinate Zn(2+). The C4-type zinc finger occupies 31-51; it reads CAECSSKLSLSRTDAVRCKDC.

Belongs to the archaeal Rpo12/eukaryotic RPC10 RNA polymerase subunit family. As to quaternary structure, component of the RNA polymerase I (Pol I), RNA polymerase II (Pol II) and RNA polymerase III (Pol III) complexes. Component of the RNA polymerase I (Pol I) complex consisting of 14 subunits: RPA135, RPA190, RPC40, RPA14, RPB5, RPO26, RPA43, RPB8, RPA12, RPB10, RPC19, RPC10, RPA49 and RPA34. The complex is composed of a horseshoe-shaped core containing ten subunits (RPA135, RPA190, RPB5, RPO26, RPB8, RPB10, RPC10, RPA12, RPC19 and RPC40) where RPA135 and RPA190 form the DNA-binding cleft. Outside of the core, RPA14 and RPA43 form the stalk that mediates interactions with transcription initiation factors and newly synthesized RNA. Component of the RNA polymerase II (Pol II) complex consisting of 12 subunits: RPO21, RPB2, RPB3, RPB4, RPB5, RPO26, RPB7, RPB8, RPB9, RPB10 and RPC10. Component of the RNA polymerase III (Pol III) complex consisting of 17 subunits. Interacts, via its C-terminus, with TFIIIC subunit TFC4. Post-translationally, the N-terminus is blocked.

The protein resides in the nucleus. Its subcellular location is the nucleolus. It localises to the peroxisome. Its function is as follows. DNA-dependent RNA polymerases catalyze the transcription of DNA into RNA using the four ribonucleoside triphosphates as substrates. Common component of RNA polymerases I, II and III which synthesize ribosomal RNA precursors, mRNA precursors and many functional non-coding RNAs, and a small RNAs, such as 5S rRNA and tRNAs, respectively. RNA polymerases are composed of mobile elements that move relative to each other. In Pol II, the core element with the central large cleft comprises RPB3, RBP10, RPB11, RPB12 and regions of RPB1 and RPB2 forming the active center. This chain is DNA-directed RNA polymerases I, II, and III subunit RPABC4 (RPC10), found in Saccharomyces cerevisiae (strain ATCC 204508 / S288c) (Baker's yeast).